We begin with the raw amino-acid sequence, 346 residues long: Upstream stimulatory factor 2 (346 aa).

Disordered regions lie at residues 1 to 44 (MDML…PGAE) and 215 to 244 (APRT…NEVE). Low complexity predominate over residues 11 to 20 (AASATAAAAA). Over residues 226 to 244 (DGTRTPRDERRRAQHNEVE) the composition is skewed to basic and acidic residues. Residues 235–290 (RRRAQHNEVERRRRDKINNWIVQLSKIIPDCNADNSKTGASKGGILSKACDYIREL) form the bHLH domain. The tract at residues 307 to 328 (LQMDNELLRQQIEELKNENALL) is leucine-zipper.

As to quaternary structure, interacts with MAF. Efficient DNA binding requires dimerization with another bHLH protein. Binds DNA as a homodimer or a heterodimer (USF1/USF2). In vivo, the USF1/USF2A heterodimer represents over 66% of the usf binding activity whereas the USF1 and USF2A homodimers represent less than 10%. The USF1/USF2B heterodimer accounted for almost 15% in some cell. In terms of tissue distribution, ubiquitous.

The protein resides in the nucleus. In terms of biological role, transcription factor that binds to a symmetrical DNA sequence (E-boxes) (5'-CACGTG-3') that is found in a variety of viral and cellular promoters. The sequence is that of Upstream stimulatory factor 2 (USF2) from Homo sapiens (Human).